We begin with the raw amino-acid sequence, 214 residues long: Holliday junction branch migration complex subunit RuvA (214 aa).

A domain I region spans residues 1–63; sequence MIASLSGTVE…EDALTLYGFA (63 aa). A domain II region spans residues 64-142; the sequence is DRDEREVFEV…PTGEPVPGAE (79 aa). The interval 143 to 151 is flexible linker; that stretch reads AEASDEPAV. Residues 151-214 are domain III; that stretch reads VETVWHADVV…GMAGAVRGGR (64 aa).

It belongs to the RuvA family. In terms of assembly, homotetramer. Forms an RuvA(8)-RuvB(12)-Holliday junction (HJ) complex. HJ DNA is sandwiched between 2 RuvA tetramers; dsDNA enters through RuvA and exits via RuvB. An RuvB hexamer assembles on each DNA strand where it exits the tetramer. Each RuvB hexamer is contacted by two RuvA subunits (via domain III) on 2 adjacent RuvB subunits; this complex drives branch migration. In the full resolvosome a probable DNA-RuvA(4)-RuvB(12)-RuvC(2) complex forms which resolves the HJ.

It localises to the cytoplasm. The RuvA-RuvB-RuvC complex processes Holliday junction (HJ) DNA during genetic recombination and DNA repair, while the RuvA-RuvB complex plays an important role in the rescue of blocked DNA replication forks via replication fork reversal (RFR). RuvA specifically binds to HJ cruciform DNA, conferring on it an open structure. The RuvB hexamer acts as an ATP-dependent pump, pulling dsDNA into and through the RuvAB complex. HJ branch migration allows RuvC to scan DNA until it finds its consensus sequence, where it cleaves and resolves the cruciform DNA. This Micrococcus luteus (strain ATCC 4698 / DSM 20030 / JCM 1464 / CCM 169 / CCUG 5858 / IAM 1056 / NBRC 3333 / NCIMB 9278 / NCTC 2665 / VKM Ac-2230) (Micrococcus lysodeikticus) protein is Holliday junction branch migration complex subunit RuvA.